Consider the following 695-residue polypeptide: Follicle-stimulating hormone receptor (695 aa).

Residues 1-17 (MALLLVALLAFLSLGSG) form the signal peptide. Disulfide bonds link Cys18–Cys25 and Cys23–Cys32. The LRRNT domain maps to 18–46 (CHHRLCHCSNGVFLCQESKVTEIPSDLPR). Over 18–366 (CHHRLCHCSN…EDIMGDDILR (349 aa)) the chain is Extracellular. LRR repeat units lie at residues 49 to 72 (VELRFVLTKLRVIPKGAFSGFGDL), 73 to 97 (EKIEISQNDVLEVIEANVFSNLPKL), 98 to 118 (HEIRIEKANNLLYIDPDAFQN), 119 to 143 (LPNLRYLLISNTGIKHLPAVHKIQS), 144 to 169 (LQKVLLDIQDNINIHTVERNSFMGLS), 170 to 192 (FESMTVWLSKNGIQEIHNCAFNG), 193 to 216 (TQLDELNLSDNSNLEELPNDVFQG), 217 to 240 (ASGPVILDISRTRIRSLPSYGLEN), and 241 to 259 (LKKLRAKSTYRLKKLPSLE). Residues Asn191 and Asn199 are each glycosylated (N-linked (GlcNAc...) asparagine). 4 disulfides stabilise this stretch: Cys275–Cys346, Cys276–Cys292, Cys276–Cys356, and Cys292–Cys338. Asn293 is a glycosylation site (N-linked (GlcNAc...) asparagine). At Tyr335 the chain carries Sulfotyrosine. Residues 367-387 (VLIWFISILAITGNILVLVIL) form a helical membrane-spanning segment. At 388–398 (ITSQYKLTVPR) the chain is on the cytoplasmic side. The helical transmembrane segment at 399 to 421 (FLMCNLAFADLCIGIYLLLIASV) threads the bilayer. Residues 422 to 443 (DVHTKTEYHNYAIDWQTGAGCD) are Extracellular-facing. Residues Cys442 and Cys517 are joined by a disulfide bond. The chain crosses the membrane as a helical span at residues 444-465 (AAGFFTVFASELSVYTLTAITL). Residues 466-485 (ERWHTITHAMQLECKVQLRH) lie on the Cytoplasmic side of the membrane. Residues 486–508 (AASIMLVGWIFAFAVALFPIFGI) traverse the membrane as a helical segment. The Extracellular segment spans residues 509 to 528 (SSYMKVSICLPMDIDSPLSQ). The chain crosses the membrane as a helical span at residues 529-550 (LYVMSLLVLNVLAFVVICGCYT). Residues 551–573 (HIYLTVRNPNITSSSSDTKIAKR) are Cytoplasmic-facing. A helical membrane pass occupies residues 574–597 (MAMLIFTDFLCMAPISFFAISASL). The Extracellular segment spans residues 598-608 (KVPLITVSKSK). A helical membrane pass occupies residues 609 to 630 (ILLVLFYPINSCANPFLYAIFT). Over 631 to 695 (KNFRRDFFIL…LIPLRHLAKN (65 aa)) the chain is Cytoplasmic.

The protein belongs to the G-protein coupled receptor 1 family. FSH/LSH/TSH subfamily. Homotrimer. Functions as a homotrimer binding the FSH hormone heterodimer composed of CGA and FSHB. Interacts with ARRB2. Interacts with APPL2; interaction is independent of follicle stimulating hormone stimulation. Post-translationally, N-glycosylated; indirectly required for FSH-binding, possibly via a conformational change that allows high affinity binding of hormone. Sulfated.

The protein localises to the cell membrane. G protein-coupled receptor for follitropin, the follicle-stimulating hormone. Through cAMP production activates the downstream PI3K-AKT and ERK1/ERK2 signaling pathways. The chain is Follicle-stimulating hormone receptor (FSHR) from Bos taurus (Bovine).